The following is a 143-amino-acid chain: Aspartate 1-decarboxylase (143 aa).

The active-site Schiff-base intermediate with substrate; via pyruvic acid is Ser25. Ser25 carries the pyruvic acid (Ser) modification. Thr57 serves as a coordination point for substrate. Tyr58 functions as the Proton donor in the catalytic mechanism. Gly73–Ala75 provides a ligand contact to substrate.

It belongs to the PanD family. In terms of assembly, heterooctamer of four alpha and four beta subunits. The cofactor is pyruvate. Post-translationally, is synthesized initially as an inactive proenzyme, which is activated by self-cleavage at a specific serine bond to produce a beta-subunit with a hydroxyl group at its C-terminus and an alpha-subunit with a pyruvoyl group at its N-terminus.

The protein resides in the cytoplasm. It carries out the reaction L-aspartate + H(+) = beta-alanine + CO2. The protein operates within cofactor biosynthesis; (R)-pantothenate biosynthesis; beta-alanine from L-aspartate: step 1/1. In terms of biological role, catalyzes the pyruvoyl-dependent decarboxylation of aspartate to produce beta-alanine. This Mycobacterium ulcerans (strain Agy99) protein is Aspartate 1-decarboxylase.